The primary structure comprises 403 residues: uncharacterized protein (403 aa).

A run of 2 helical transmembrane segments spans residues 29 to 49 and 55 to 75; these read FVIF…CGFL and AFIA…FFGC.

The protein belongs to the chlamydial CPn_0129/CT_036/TC_0306 family.

It is found in the cell membrane. This is an uncharacterized protein from Chlamydia trachomatis serovar D (strain ATCC VR-885 / DSM 19411 / UW-3/Cx).